The chain runs to 809 residues: TLR4 interactor with leucine rich repeats (809 aa).

A signal peptide spans 1-25 (MEGVGAVRFWLVVCGCLAFPPRAES). In terms of domain architecture, LRRNT spans 26-57 (VCPERCDCQHPQHLLCTNRGLRAVPKTSSLPS). The Extracellular portion of the chain corresponds to 26 to 694 (VCPERCDCQH…AGGRGGVDYQ (669 aa)). LRR repeat units lie at residues 61 to 81 (VLTY…DFHR), 84 to 105 (QLRR…TFEK), 108 to 129 (RLEE…TLAP), 132 to 153 (KLRI…SFEG), 156 to 177 (SLVK…VFAP), 180 to 201 (NLLY…AFSQ), 204 to 223 (KLRF…RHAA), 230 to 251 (SLST…VFQH), 254 to 275 (RLGL…AFWG), 278 to 298 (ALRE…TLLE), 302 to 323 (SLEA…TFGH), and 326 to 347 (RLRE…IFAA). N-linked (GlcNAc...) asparagine glycosylation occurs at N73. The LRRCT domain maps to 359–416 (NGWTCDCRLRGLKRWMGNWHSQGRLLTVFVQCRHPPALRGKYLDYLDDQLLQNGSCVD). N411 is a glycosylation site (N-linked (GlcNAc...) asparagine). Disordered stretches follow at residues 412–462 (GSCV…RGRL) and 483–563 (RLSR…SAVQ). Residues 421–436 (PTAGSRQWPLPTSSEE) show a composition bias toward polar residues. A compositionally biased stretch (low complexity) spans 488–506 (GPGPHQGPSAAAPGSAPQS). Over residues 521 to 543 (ANLSQTEPTPTSEPASGTPSARD) the composition is skewed to polar residues. Residues 554–563 (ASEQQESAVQ) are compositionally biased toward low complexity. N587 carries N-linked (GlcNAc...) asparagine glycosylation. The helical transmembrane segment at 695 to 715 (LLTLVLLAVNALLVLLALAAW) threads the bilayer. Topologically, residues 716 to 809 (GSRWLRRKLR…EDHLLQRFAD (94 aa)) are cytoplasmic. S796 is modified (phosphoserine).

In terms of assembly, belongs to the lipopolysaccharide (LPS) receptor, a multi-protein complex containing at least CD14, MD-2 and TLR4. Interacts with TLR4; this interaction is greatly enhanced by LPS stimulation. Interacts with LPS. N-glycolysaled. Highly expressed in brain, spinal cord and lung.

It is found in the membrane. Component of the TLR4 signaling complex. Mediates the innate immune response to bacterial lipopolysaccharide (LPS) leading to cytokine secretion. The chain is TLR4 interactor with leucine rich repeats (Tril) from Mus musculus (Mouse).